The primary structure comprises 901 residues: MAAQNEQRSERIKTTPYLEGDVLSSDSGPLLSVFALQEIMQKVRQVQADYMTATREVDFTVPDVQKILDDIKTLAAEQVYKIVKVPNILFRHIVMQSRDRVLRVDTYYEEMSQVGDVITEDEPEKFYSTIIKKVRFIRGKGSFILHDIPTRDHRGMEVAEPEVLGVEFKNVLPVLTAEHRAMIQNALDGSIIENGNVATRDVDVFIGACSEPIYRIYNRLQGYIEAVQLQELRNSIGWLERLGLRKRITYSQEVLTDFRRQDTIWVLALQLPVNPQVVWDVPRSSIANLIMNIATCLPTGEYIAPNPRISSITLTQRITTTGPFAILTGSTPTAQQLNDVRKIYLALMFPGQIILDLKIDPGERMDPAVRMVAGVVGHLLFTAGGRFTNLTQNMARQLDIALNDYLLYMYNTRVQVNYGPTGEPLDFQIGRNQYDCNVFRADFATGTGYNGWATIDVEYRDPAPYVHAQRYIRYCGIDSRELINPTTYGIGMTYHCYNEMLRMLVAAGKDSEAAYFRSMLPFHMVRFARINQIINEDLHSVFSLPDDMFNALLPDLIAGAHQNADPVVLDVSWISLWFAFNRSFEPTHRNEMLEIAPLIESVYASELSVMKVDMRHLSLMQRRFPDVLIQARPSHFWKAVLNDSPEAVKAVMNLSHSHNFINIRDMMRWVMLPSLQPSLKLVLEEEAWAAANDFEDLMLTDQVYMHRDMLPEPRLDDVERFRQEGFYYTNMLEAPPEIDRVVQYTYEIERLQANMGQFRAALRRIMDDDDWVRFGGVLRTVRVKFFDARPPDDILQGLPFSYDTNEKGGLSYATIKYATETTIFYQIYNAEFSNTPDSLVLINPTYTMTKVFINKRIVERVRVGQILAVLNRRFVAYKGKMRIMDITQSLKMGTKLAAPTV.

Belongs to the orbivirus VP3 family.

It is found in the virion. Functionally, the VP3 protein is one of the five proteins (with VP1, VP4, VP6 and VP7) which form the inner capsid of the virus. The chain is Core protein VP3 (Segment-3) from Bluetongue virus 11 (isolate USA) (BTV 11).